The sequence spans 272 residues: Orotidine 5'-phosphate decarboxylase (272 aa).

The active-site Proton donor is the Lys-93.

This sequence belongs to the OMP decarboxylase family. Type 2 subfamily.

The enzyme catalyses orotidine 5'-phosphate + H(+) = UMP + CO2. The protein operates within pyrimidine metabolism; UMP biosynthesis via de novo pathway; UMP from orotate: step 2/2. The polypeptide is Orotidine 5'-phosphate decarboxylase (Roseiflexus sp. (strain RS-1)).